Here is a 104-residue protein sequence, read N- to C-terminus: Hydrogen cyanide synthase subunit HcnA (104 aa).

The 2Fe-2S ferredoxin-type domain occupies 16–97 (ADMTIHLNGQ…GMRVETESNR (82 aa)). [2Fe-2S] cluster is bound by residues Cys60, Cys65, Cys68, and Cys81.

In terms of assembly, heterotrimer of HcnA, HcnB and HcnC.

The protein localises to the cell membrane. The enzyme catalyses glycine + 2 A = hydrogen cyanide + 2 AH2 + CO2. Oxygen is necessary for cyanogenesis. Activated by succinate, glycine methyl ester, glucose and D,L-methionine in addition to glycine. Phenazine methosulfate, methylene blue, 2,6-dichlorophenolindophenol (DCIP) and ferricyanide can replace oxygen for the reaction. Inhibited by pyrrolnitrin and acriflavine at 1 mM concentration. In terms of biological role, a three-component membrane-bound flavoenzyme that catalyzes the formation of hydrogen cyanide, a secondary metabolite, by transfer of electrons to a cyanide-resistant branch of the aerobic respiratory chain. This Pseudomonas aeruginosa (strain ATCC 15692 / DSM 22644 / CIP 104116 / JCM 14847 / LMG 12228 / 1C / PRS 101 / PAO1) protein is Hydrogen cyanide synthase subunit HcnA.